The following is a 294-amino-acid chain: Lipoyl synthase (294 aa).

[4Fe-4S] cluster is bound by residues Cys35, Cys40, Cys46, Cys61, Cys65, Cys68, and Ser275. One can recognise a Radical SAM core domain in the interval 46–264 (CWGGGTATVM…RDQGLALGFR (219 aa)).

The protein belongs to the radical SAM superfamily. Lipoyl synthase family. Requires [4Fe-4S] cluster as cofactor.

The protein localises to the cytoplasm. It catalyses the reaction [[Fe-S] cluster scaffold protein carrying a second [4Fe-4S](2+) cluster] + N(6)-octanoyl-L-lysyl-[protein] + 2 oxidized [2Fe-2S]-[ferredoxin] + 2 S-adenosyl-L-methionine + 4 H(+) = [[Fe-S] cluster scaffold protein] + N(6)-[(R)-dihydrolipoyl]-L-lysyl-[protein] + 4 Fe(3+) + 2 hydrogen sulfide + 2 5'-deoxyadenosine + 2 L-methionine + 2 reduced [2Fe-2S]-[ferredoxin]. Its pathway is protein modification; protein lipoylation via endogenous pathway; protein N(6)-(lipoyl)lysine from octanoyl-[acyl-carrier-protein]: step 2/2. Its function is as follows. Catalyzes the radical-mediated insertion of two sulfur atoms into the C-6 and C-8 positions of the octanoyl moiety bound to the lipoyl domains of lipoate-dependent enzymes, thereby converting the octanoylated domains into lipoylated derivatives. This chain is Lipoyl synthase, found in Anaeromyxobacter dehalogenans (strain 2CP-C).